A 252-amino-acid chain; its full sequence is Protein TRANSPARENT TESTA 16 (252 aa).

In terms of domain architecture, MADS-box spans 1–61 (MGRGKIEIKK…GKLSEFCSEQ (61 aa)). A K-box domain is found at 86-176 (QEQLHHEMEL…YRWLHEHRAA (91 aa)). The stretch at 121–174 (NELDGLERQLEHSVLKVRERKNELMQQQLENLSRKRRMLEEDNNNMYRWLHEHR) forms a coiled coil.

In terms of assembly, interacts with AP1/AGL7, SEP1/AGL2, SEP2/AGL4, SEP3/AGL9 and AGL3/SEP4. As to expression, expressed in buds, flowers and immature seeds, but not in roots, stems, leaves, seedlings or siliques valves. Expression in seed coat is confined to the endothelium layer.

Its subcellular location is the nucleus. In terms of biological role, transcription factor involved in the developmental regulation of the endothelium and in the accumulation of proanthocyanidins (PAs) or condensed tannins which give the seed its brown pigmentation after oxidation. Necessary for the normal activation of the BANYULS promoter in the endothelium body. Is required, together with AGL11/STK for the maternal control of endothelium formation, which is essential for female gametophyte development and fertilization, and seed formation. Interacts genetically with AGL1/SHP1 and AGL5/SHP2 in a partially antagonistic manner and represses AGL1/SHP1, AGL5/SHP2, and AGL8/FUL during flower development. Is essential for the coordination of cell divisions in ovule, seed coat development and endosperm formation. Mediates the crosstalk between endothelium and nucellus to ensure proper seed formation. Functions redundantly with AGL63/GOA to repress nucellus growth and promote its degeneration. Represses the negative regulator of autophagy and programmed cell death HVA22D in the proximal nucellus. Binds specifically to the CArG box DNA sequence 5'-CC (A/T)6 GG-3'. The sequence is that of Protein TRANSPARENT TESTA 16 (TT16) from Arabidopsis thaliana (Mouse-ear cress).